The following is a 271-amino-acid chain: Glutamate racemase (271 aa).

Substrate contacts are provided by residues 9–10 and 41–42; these read DS and YG. Catalysis depends on Cys72, which acts as the Proton donor/acceptor. Position 73-74 (73-74) interacts with substrate; it reads NT. The active-site Proton donor/acceptor is Cys183. 184–185 contributes to the substrate binding site; the sequence is TH.

The protein belongs to the aspartate/glutamate racemases family.

The enzyme catalyses L-glutamate = D-glutamate. It participates in cell wall biogenesis; peptidoglycan biosynthesis. Its function is as follows. Provides the (R)-glutamate required for cell wall biosynthesis. The chain is Glutamate racemase from Exiguobacterium sibiricum (strain DSM 17290 / CCUG 55495 / CIP 109462 / JCM 13490 / 255-15).